We begin with the raw amino-acid sequence, 348 residues long: tRNA N6-adenosine threonylcarbamoyltransferase (348 aa).

Fe cation-binding residues include His119 and His123. Residues 141–145 (LVSGG), Asp174, Gly187, Asp191, and Asn280 contribute to the substrate site. Asp310 lines the Fe cation pocket.

It belongs to the KAE1 / TsaD family. It depends on Fe(2+) as a cofactor.

It is found in the cytoplasm. The catalysed reaction is L-threonylcarbamoyladenylate + adenosine(37) in tRNA = N(6)-L-threonylcarbamoyladenosine(37) in tRNA + AMP + H(+). Functionally, required for the formation of a threonylcarbamoyl group on adenosine at position 37 (t(6)A37) in tRNAs that read codons beginning with adenine. Is involved in the transfer of the threonylcarbamoyl moiety of threonylcarbamoyl-AMP (TC-AMP) to the N6 group of A37, together with TsaE and TsaB. TsaD likely plays a direct catalytic role in this reaction. The polypeptide is tRNA N6-adenosine threonylcarbamoyltransferase (Enterococcus faecalis (strain ATCC 700802 / V583)).